A 462-amino-acid chain; its full sequence is Phosphoglucosamine mutase (462 aa).

Residue serine 112 is the Phosphoserine intermediate of the active site. Mg(2+) is bound by residues serine 112, aspartate 250, aspartate 252, and aspartate 254. A Phosphoserine modification is found at serine 112.

Belongs to the phosphohexose mutase family. The cofactor is Mg(2+). In terms of processing, activated by phosphorylation.

It catalyses the reaction alpha-D-glucosamine 1-phosphate = D-glucosamine 6-phosphate. Its function is as follows. Catalyzes the conversion of glucosamine-6-phosphate to glucosamine-1-phosphate. The chain is Phosphoglucosamine mutase from Parasynechococcus marenigrum (strain WH8102).